We begin with the raw amino-acid sequence, 371 residues long: Cytochrome b (371 aa).

Transmembrane regions (helical) follow at residues 25-45 (FGSMLLACSSMQVLTGFFLAV), 69-90 (WMMQNLHAIGASMFFICIYTHI), 105-125 (WLSGTTLLIMLMATAFFGYVL), and 170-190 (FFALHFILPFGIISLSSLHIM). The heme b site is built by His-75 and His-89. His-174 and His-188 together coordinate heme b. His-193 contacts a ubiquinone. 4 helical membrane passes run 218–238 (YKDMLMLSLMILALLMTVAFF), 280–300 (LGGALALVMSIMILLTAPFTH), 312–332 (IMQLMFWTLVATFAVITWAAT), and 339–358 (FTTISQVASTMYFMFFITNP).

Belongs to the cytochrome b family. The cytochrome bc1 complex contains 3 respiratory subunits (MT-CYB, CYC1 and UQCRFS1), 2 core proteins (UQCRC1 and UQCRC2) and probably 6 low-molecular weight proteins. Heme b serves as cofactor.

It is found in the mitochondrion inner membrane. Its function is as follows. Component of the ubiquinol-cytochrome c reductase complex (complex III or cytochrome b-c1 complex) that is part of the mitochondrial respiratory chain. The b-c1 complex mediates electron transfer from ubiquinol to cytochrome c. Contributes to the generation of a proton gradient across the mitochondrial membrane that is then used for ATP synthesis. This Eryx colubrinus colubrinus protein is Cytochrome b (MT-CYB).